The primary structure comprises 527 residues: AAA ATPase forming ring-shaped complexes (527 aa).

The segment covering 1–18 (MVTMSSPTDSSPSNSFSD) has biased composition (low complexity). A disordered region spans residues 1 to 38 (MVTMSSPTDSSPSNSFSDFNREEQSRLSDEVRQLKRTN). A compositionally biased stretch (basic and acidic residues) spans 19–33 (FNREEQSRLSDEVRQ). Residues 21-53 (REEQSRLSDEVRQLKRTNSDLGARNAKLAEMLK) are a coiled coil. Position 257–262 (257–262 (GCGKTL)) interacts with ATP. Residues 492-515 (DENQQSEDLPNTSNPDEWSRITGR) form a disordered region. Over residues 497 to 507 (SEDLPNTSNPD) the composition is skewed to polar residues.

Belongs to the AAA ATPase family. In terms of assembly, homohexamer. Assembles into a hexameric ring structure.

This is AAA ATPase forming ring-shaped complexes from Corynebacterium glutamicum (strain R).